A 1125-amino-acid polypeptide reads, in one-letter code: MAQAGRSGDAFASLDQRRERQEEQAQSGLDKVFYFQGVVELFNRMKIAYGRTPAWTALMKCNAIYLKDFKTAVGVEGTRYGLFFAEEVTKPTWSPDIGANLITLGEKACLDAQNAKYERLQASLKTTSGLVHQVMEKTREAKENLEKANKIQEQLDKVIESNKALHRKIQERNREKMQEYMVRLHNTQKDRDDWVQRCSRLEQENVTLQKRLKEKENALVSVGWDLLGWIVISVLVFGLISLADAQNLTPPAKIVITPGQAEFMDLAKLEKIQVRKYRLDSCELPPEKGCVLYKDYLTTRPVSFLELMAKCSKPDWVSESSYNETTLMEECIQIFGAEWCEGKLVDLVPRKCGEQHVLVNIIEQIEKTREVVTLIYGKVMSYRLDMWITSIFSLVLAGNKEKLFKMAPFIFVAWFLNIPVFLTCVAVNIFPVVSLPFILFQIFMPQFVLVNAFLLWLTLTLTAFYWSEGPKILMEISYALVYTIGFVLWSLGLAVGVTLKLTMVHQILMFCVVAAAICGTKFACTTITVQHPDGTTAKYTRVGKLKNNVVNQCKKVVTTLQTRGVIPATPAKTASIVIVEGKNGTGVGFRFMNYILTAEHVVQGSDIATLKNGSVSVKSKVIKTIPIFESVDNVAVLKLPPELNSVKPIKLAKKVQSDYLTLTAYDPNFQHAATFTGWCIIDGNWLNNSFDTKFGNSGAPYCDHDGRLVGIHLGTQGVLSQGIVIVDALKNTFQLADQCRPQNFDMDEFLEKVIAGTKVSHAAILKELEELREEVQFLKKKCVTYDDYWLCQTIFGQAKGKTKKTVRGRKHLVTKRALGKGHFMKMRMLTDEEYQNMIEKGFSAEEIREAVNALREQAWLNYCIDNDVDDEGEEDWYDDMVETDRVNQEIDEAIERAMEDRGEFYQKKSRLTFVEQAMMHLIQVSKERSQTAKLEVQKENEAQLVKMFERCVTDENTPEGTTSIAALSTEDDVRLVEGKVIDFTKAKNIPVDGEIRREIIPGTKCTEISTGPENKKNILKKKDTHIAEGKVETKSSQQPVDVKDDKPVALEQRKPRACKWCGSSQKHDYRECRFQREKRFCVYCAAMHSMFEGHIRPIECTSCKKSFSGIEKLEDHVVSGECQKN.

Positions 131–218 form a coiled coil; it reads VHQVMEKTRE…QKRLKEKENA (88 aa). Helical transmembrane passes span 220–240, 379–398, 407–427, 437–457, 479–499, and 507–527; these read VSVG…FGLI, VMSY…VLAG, APFI…CVAV, FILF…LLWL, ALVY…GVTL, and ILMF…CTTI. Catalysis depends on charge relay system; for serine protease activity residues histidine 600, aspartate 632, and serine 697. Tyrosine 834 bears the O-(5'-phospho-RNA)-tyrosine mark.

Belongs to the astroviridae polyprotein 1A family. As to quaternary structure, monomer. In terms of processing, cleaved by the viral and host proteases. The protease is probably autocatalytically cleaved.

The protein resides in the host membrane. The catalysed reaction is RNA(n) + a ribonucleoside 5'-triphosphate = RNA(n+1) + diphosphate. In terms of biological role, responsible for the cleavage of the polyprotein into functional products. Its function is as follows. Protein covalently attached to the 5' extremity of the genomic and subgenomic RNAs. It may serve as a primer for the replicase. This Turkey astrovirus 2 (TAstV-2) protein is Non-structural polyprotein 1A (ORF1).